We begin with the raw amino-acid sequence, 118 residues long: Acetylcholine receptor subunit beta (118 aa).

Positions 1 to 15 (APTVALLLLCALCSA) are cleaved as a signal peptide.

This sequence belongs to the ligand-gated ion channel (TC 1.A.9) family. Acetylcholine receptor (TC 1.A.9.1) subfamily. Beta-1/CHRNB1 sub-subfamily. In terms of assembly, pentamer of two alpha chains, and one each of the beta, delta, and gamma chains.

It localises to the postsynaptic cell membrane. The protein resides in the cell membrane. It catalyses the reaction K(+)(in) = K(+)(out). The enzyme catalyses Na(+)(in) = Na(+)(out). Functionally, after binding acetylcholine, the AChR responds by an extensive change in conformation that affects all subunits and leads to opening of an ion-conducting channel across the plasma membrane. This Gallus gallus (Chicken) protein is Acetylcholine receptor subunit beta (CHRNB1).